The primary structure comprises 94 residues: Large ribosomal subunit protein uL23 (94 aa).

This sequence belongs to the universal ribosomal protein uL23 family. As to quaternary structure, part of the 50S ribosomal subunit. Contacts protein L29, and trigger factor when it is bound to the ribosome.

Functionally, one of the early assembly proteins it binds 23S rRNA. One of the proteins that surrounds the polypeptide exit tunnel on the outside of the ribosome. Forms the main docking site for trigger factor binding to the ribosome. This Ligilactobacillus salivarius (strain UCC118) (Lactobacillus salivarius) protein is Large ribosomal subunit protein uL23.